The primary structure comprises 173 residues: Putative metal-dependent hydrolase BT9727_2476 (173 aa).

Zn(2+) is bound by residues histidine 65, histidine 156, and histidine 160.

It belongs to the metal hydrolase YfiT family. Homodimer. It depends on Zn(2+) as a cofactor.

It is found in the cytoplasm. Functionally, possible metal-dependent hydrolase. The protein is Putative metal-dependent hydrolase BT9727_2476 of Bacillus thuringiensis subsp. konkukian (strain 97-27).